Here is a 315-residue protein sequence, read N- to C-terminus: Protoheme IX farnesyltransferase (315 aa).

Transmembrane regions (helical) follow at residues 34-54 (VISLVVFTGAAGLAMAPGPIN), 55-75 (PLIAAVSILCICMASGAAGAI), 105-125 (ALGFGIGLSVASVLLMWLAAN), 127-147 (LAAFILAFSIFFYAVIYTMWL), 155-175 (IVIGGAAGAFPPMIGWAATTG), 177-197 (LGVLPVVMFAIVFLWTPPHFW), 226-246 (WQILFYTLILSAVSLVPSFLH), 251-271 (LYTGVASLLDAGFVACAVGVL), and 294-314 (YSLAYLFLLFCGLLADHFLIM).

It belongs to the UbiA prenyltransferase family. Protoheme IX farnesyltransferase subfamily.

It is found in the cell inner membrane. The catalysed reaction is heme b + (2E,6E)-farnesyl diphosphate + H2O = Fe(II)-heme o + diphosphate. It functions in the pathway porphyrin-containing compound metabolism; heme O biosynthesis; heme O from protoheme: step 1/1. In terms of biological role, converts heme B (protoheme IX) to heme O by substitution of the vinyl group on carbon 2 of heme B porphyrin ring with a hydroxyethyl farnesyl side group. In Gluconacetobacter diazotrophicus (strain ATCC 49037 / DSM 5601 / CCUG 37298 / CIP 103539 / LMG 7603 / PAl5), this protein is Protoheme IX farnesyltransferase.